A 270-amino-acid polypeptide reads, in one-letter code: Tetracenomycin polyketide synthesis O-methyltransferase TcmP (270 aa).

It participates in antibiotic biosynthesis; tetracenomycin C biosynthesis. In terms of biological role, O-methyltransferase that catalyzes the methylation of the C-9 carboxy group of tetracenomycin E (TCM E) to yield TCM A2. Catalyzes as well the following side reactions: methylation of 8-O-methyl-TCM D3 to 9-carboxymethyl-8-O-methyl-TCM D3; and of TCM B3 to 9-carboxymethyl-TCM B3. This is Tetracenomycin polyketide synthesis O-methyltransferase TcmP (tcmP) from Streptomyces glaucescens.